The primary structure comprises 274 residues: Bis(5'-nucleosyl)-tetraphosphatase, symmetrical (274 aa).

The protein belongs to the Ap4A hydrolase family.

The enzyme catalyses P(1),P(4)-bis(5'-adenosyl) tetraphosphate + H2O = 2 ADP + 2 H(+). Hydrolyzes diadenosine 5',5'''-P1,P4-tetraphosphate to yield ADP. This is Bis(5'-nucleosyl)-tetraphosphatase, symmetrical from Shewanella sp. (strain W3-18-1).